A 359-amino-acid polypeptide reads, in one-letter code: Fructose-like permease IIC component 2 (359 aa).

The 334-residue stretch at 11 to 344 (TRQHLMTGVS…KSLARKNGSS (334 aa)) folds into the PTS EIIC type-2 domain. 9 helical membrane passes run 19-39 (VSHM…SVML), 60-80 (IGVA…GYSI), 99-119 (FGAG…VVHY), 135-155 (IFII…WGLG), 176-196 (SIVM…GGPV), 216-236 (VAIA…ATLI), 251-271 (AALV…AAAD), 290-310 (AALV…LPVV), and 314-334 (LGYI…VNVL).

It is found in the cell inner membrane. In terms of biological role, the phosphoenolpyruvate-dependent sugar phosphotransferase system (PTS), a major carbohydrate active -transport system, catalyzes the phosphorylation of incoming sugar substrates concomitant with their translocation across the cell membrane. In Escherichia coli (strain K12), this protein is Fructose-like permease IIC component 2 (frwC).